The primary structure comprises 644 residues: Type III restriction-modification enzyme EcoP15I Mod subunit (644 aa).

Residues 123–126 form a binding of S-adenosyl methionine region; the sequence is DPPY.

It belongs to the N(4)/N(6)-methyltransferase family. Forms a homodimer capable of methylating the target sequence in the absence of Res. A heterotetramer with stoichiometry Res(2)Mod(2). A heterotrimer with stoichiometry Res(1)Mod(2).

The catalysed reaction is a 2'-deoxyadenosine in DNA + S-adenosyl-L-methionine = an N(6)-methyl-2'-deoxyadenosine in DNA + S-adenosyl-L-homocysteine + H(+). In terms of biological role, a beta subtype methylase that binds the system-specific DNA recognition site 5'-CAGCAG-3' and methylates A-5 (of only 1 strand as the other does not have an A residue). DNA restriction requires both the Res and Mod subunits. The A-5 nucleotide flips into the catalytic pocket of one Mod subunit for modification, while the other Mod subunit makes most of the DNA sequence-specific contacts. This is Type III restriction-modification enzyme EcoP15I Mod subunit from Escherichia coli.